The following is a 102-amino-acid chain: Small ribosomal subunit protein uS10 (102 aa).

This sequence belongs to the universal ribosomal protein uS10 family. In terms of assembly, part of the 30S ribosomal subunit.

Its function is as follows. Involved in the binding of tRNA to the ribosomes. The polypeptide is Small ribosomal subunit protein uS10 (Caldanaerobacter subterraneus subsp. tengcongensis (strain DSM 15242 / JCM 11007 / NBRC 100824 / MB4) (Thermoanaerobacter tengcongensis)).